The chain runs to 96 residues: MNLRPLHDRVIVKRLDQETKTASGLIIPEAAAEKPDQGEVLAIGNGKILDDGKVRPLDVKVGDRVLFGKYAGQSVKVDGNEVLVMREEDIMAIVQK.

Belongs to the GroES chaperonin family. As to quaternary structure, heptamer of 7 subunits arranged in a ring. Interacts with the chaperonin GroEL.

It is found in the cytoplasm. Together with the chaperonin GroEL, plays an essential role in assisting protein folding. The GroEL-GroES system forms a nano-cage that allows encapsulation of the non-native substrate proteins and provides a physical environment optimized to promote and accelerate protein folding. GroES binds to the apical surface of the GroEL ring, thereby capping the opening of the GroEL channel. This Herminiimonas arsenicoxydans protein is Co-chaperonin GroES.